Consider the following 242-residue polypeptide: 4-hydroxy-tetrahydrodipicolinate reductase (242 aa).

Residues 79–81 and 103–106 contribute to the NAD(+) site; these read ATT and SANM. His135 serves as the catalytic Proton donor/acceptor. His136 lines the (S)-2,3,4,5-tetrahydrodipicolinate pocket. Catalysis depends on Lys139, which acts as the Proton donor. Residue 145–146 participates in (S)-2,3,4,5-tetrahydrodipicolinate binding; that stretch reads GT.

It belongs to the DapB family.

The protein resides in the cytoplasm. The enzyme catalyses (S)-2,3,4,5-tetrahydrodipicolinate + NAD(+) + H2O = (2S,4S)-4-hydroxy-2,3,4,5-tetrahydrodipicolinate + NADH + H(+). It carries out the reaction (S)-2,3,4,5-tetrahydrodipicolinate + NADP(+) + H2O = (2S,4S)-4-hydroxy-2,3,4,5-tetrahydrodipicolinate + NADPH + H(+). It participates in amino-acid biosynthesis; L-lysine biosynthesis via DAP pathway; (S)-tetrahydrodipicolinate from L-aspartate: step 4/4. Catalyzes the conversion of 4-hydroxy-tetrahydrodipicolinate (HTPA) to tetrahydrodipicolinate. This is 4-hydroxy-tetrahydrodipicolinate reductase from Staphylococcus carnosus (strain TM300).